The sequence spans 1680 residues: Alpha-protein kinase 3 (1680 aa).

A disordered region spans residues methionine 1–arginine 37. The span at arginine 9–glycine 21 shows a compositional bias: gly residues. In terms of domain architecture, Ig-like 1 spans proline 77 to threonine 173. Serine 229 bears the Phosphoserine mark. 5 disordered regions span residues serine 237–aspartate 288, glutamate 302–glutamate 759, serine 785–serine 950, glutamate 1078–leucine 1128, and proline 1147–alanine 1244. Positions lysine 320–glutamate 337 are enriched in basic and acidic residues. The segment covering serine 339–proline 353 has biased composition (polar residues). A compositionally biased stretch (pro residues) spans alanine 402 to valine 426. Positions glutamate 514–leucine 532 are enriched in low complexity. Polar residues-rich tracts occupy residues serine 557–lysine 566 and glutamate 731–serine 744. Over residues serine 785–glycine 796 the composition is skewed to basic and acidic residues. The segment covering serine 917–glutamate 932 has biased composition (polar residues). Basic and acidic residues-rich tracts occupy residues glutamate 1087–threonine 1111 and alanine 1151–serine 1165. Phosphoserine is present on serine 1199. Residues aspartate 1231–alanine 1244 show a composition bias toward basic and acidic residues. The Ig-like 2 domain occupies proline 1251–serine 1339. A disulfide bond links cysteine 1273 and cysteine 1323. One can recognise an Alpha-type protein kinase domain in the interval lysine 1367 to leucine 1600. The interval proline 1603–arginine 1680 is disordered. Composition is skewed to polar residues over residues proline 1639 to threonine 1660 and aspartate 1671 to arginine 1680.

It belongs to the protein kinase superfamily. Alpha-type protein kinase family. ALPK subfamily. In terms of tissue distribution, expressed in the heart and skeletal muscle of adult mice.

It localises to the nucleus. The catalysed reaction is L-seryl-[protein] + ATP = O-phospho-L-seryl-[protein] + ADP + H(+). It carries out the reaction L-threonyl-[protein] + ATP = O-phospho-L-threonyl-[protein] + ADP + H(+). Functionally, involved in cardiomyocyte differentiation. In Mus musculus (Mouse), this protein is Alpha-protein kinase 3.